We begin with the raw amino-acid sequence, 253 residues long: Mediator of RNA polymerase II transcription subunit 19 (253 aa).

Disordered regions lie at residues 18–49 (EQYSPKSSPRAGGAGGRSPVVARQDSSGTLKT) and 157–253 (GPLP…TQVF). The segment covering 21–40 (SPKSSPRAGGAGGRSPVVAR) has biased composition (low complexity). Basic residues-rich tracts occupy residues 165 to 183 (HLKSVPTRKHKNKHKKHKY) and 220 to 233 (RKKRKKEKKRKKQR).

The protein belongs to the Mediator complex subunit 19 family. Component of the Mediator complex.

The protein localises to the nucleus. Component of the Mediator complex, a coactivator involved in the regulated transcription of nearly all RNA polymerase II-dependent genes. Mediator functions as a bridge to convey information from gene-specific regulatory proteins to the basal RNA polymerase II transcription machinery. Mediator is recruited to promoters by direct interactions with regulatory proteins and serves as a scaffold for the assembly of a functional preinitiation complex with RNA polymerase II and the general transcription factors. The protein is Mediator of RNA polymerase II transcription subunit 19 (MED19) of Aedes aegypti (Yellowfever mosquito).